Consider the following 104-residue polypeptide: L-rhamnose mutarotase (104 aa).

Tyrosine 18 contributes to the substrate binding site. Residue histidine 22 is the Proton donor of the active site. Substrate is bound by residues tyrosine 41 and tryptophan 76–tryptophan 77.

The protein belongs to the rhamnose mutarotase family. Homodimer.

The protein resides in the cytoplasm. The enzyme catalyses alpha-L-rhamnose = beta-L-rhamnose. It functions in the pathway carbohydrate metabolism; L-rhamnose metabolism. Functionally, involved in the anomeric conversion of L-rhamnose. The chain is L-rhamnose mutarotase from Sinorhizobium fredii (strain NBRC 101917 / NGR234).